A 288-amino-acid polypeptide reads, in one-letter code: Transposase InsF for insertion sequence IS3A (288 aa).

An Integrase catalytic domain is found at 124-287; sequence YASGPNQKWA…SPEQFENKNL (164 aa).

Belongs to the transposase IS3/IS150/IS904 family.

Involved in the transposition of the insertion sequence IS3. This chain is Transposase InsF for insertion sequence IS3A (insF1), found in Escherichia coli (strain K12).